The primary structure comprises 365 residues: UDP-N-acetylglucosamine--N-acetylmuramyl-(pentapeptide) pyrophosphoryl-undecaprenol N-acetylglucosamine transferase (365 aa).

UDP-N-acetyl-alpha-D-glucosamine is bound by residues 19–21 (TGG), asparagine 131, arginine 170, serine 201, isoleucine 255, 274–279 (ALTVTE), and glutamine 300.

The protein belongs to the glycosyltransferase 28 family. MurG subfamily.

The protein resides in the cell inner membrane. It carries out the reaction di-trans,octa-cis-undecaprenyl diphospho-N-acetyl-alpha-D-muramoyl-L-alanyl-D-glutamyl-meso-2,6-diaminopimeloyl-D-alanyl-D-alanine + UDP-N-acetyl-alpha-D-glucosamine = di-trans,octa-cis-undecaprenyl diphospho-[N-acetyl-alpha-D-glucosaminyl-(1-&gt;4)]-N-acetyl-alpha-D-muramoyl-L-alanyl-D-glutamyl-meso-2,6-diaminopimeloyl-D-alanyl-D-alanine + UDP + H(+). Its pathway is cell wall biogenesis; peptidoglycan biosynthesis. Cell wall formation. Catalyzes the transfer of a GlcNAc subunit on undecaprenyl-pyrophosphoryl-MurNAc-pentapeptide (lipid intermediate I) to form undecaprenyl-pyrophosphoryl-MurNAc-(pentapeptide)GlcNAc (lipid intermediate II). In Acinetobacter baumannii (strain AB307-0294), this protein is UDP-N-acetylglucosamine--N-acetylmuramyl-(pentapeptide) pyrophosphoryl-undecaprenol N-acetylglucosamine transferase.